We begin with the raw amino-acid sequence, 1176 residues long: Pesticidal crystal protein Cry1Ag (1176 aa).

The protein belongs to the delta endotoxin family.

In terms of biological role, promotes colloidosmotic lysis by binding to the midgut epithelial cells of many lepidopteran larvae. The chain is Pesticidal crystal protein Cry1Ag (cry1Ag) from Bacillus thuringiensis.